The primary structure comprises 347 residues: Gamma-glutamyl hydrolase 2 (347 aa).

Residues 1–22 form the signal peptide; it reads MWSYVWLPLVALSLFKDSIIMA. The 297-residue stretch at 45 to 341 folds into the Gamma-glutamyl hydrolase domain; it reads APDPNLNYRP…IGYDEVYIFT (297 aa). Catalysis depends on Cys155, which acts as the Nucleophile. Catalysis depends on His268, which acts as the Proton donor.

This sequence belongs to the peptidase C26 family. Expressed in roots, in leaves, stems and siliques.

It is found in the vacuole. The protein resides in the secreted. It localises to the extracellular space. Its subcellular location is the cell wall. The catalysed reaction is (6S)-5,6,7,8-tetrahydrofolyl-(gamma-L-Glu)(n) + (n-1) H2O = (6S)-5,6,7,8-tetrahydrofolate + (n-1) L-glutamate. Cleaves the polyglutamate sidechains of folate polyglutamates in the vacuole. Is important for polyglutamyl tail length determination before vacuolar exit. Plays a role on folate stability and intracellular folate content. Has endopeptidase activity against 4-amino-10-methylpteroyl penta-, tetra-, tri- and di-gamma-L-glutamate substrates and is responsible for the production of folic acid, also called pteroylglutamic acid (PteGlu) from teroylpolyglutamates. The sequence is that of Gamma-glutamyl hydrolase 2 (GGH2) from Arabidopsis thaliana (Mouse-ear cress).